The following is a 160-amino-acid chain: MRRAVCPGSLDPIHNGHLEVIARAAGLFDEVIVAVSTNYAKKYRFSLEERLEMASETLASLRGIVIEPMGAGLLAEYCRQRGASAIVKGIRSSSDFDYEVPMATMNRQLTGVETVFLPAEARYLHLSSTMIKEVEGLGGDVSDYVPRAVLRRFHEGKETN.

Serine 9 serves as a coordination point for substrate. ATP contacts are provided by residues 9 to 10 and histidine 17; that span reads SL. Positions 41, 74, and 88 each coordinate substrate. ATP contacts are provided by residues 89–91, glutamate 99, and 123–129; these read GIR and YLHLSST.

This sequence belongs to the bacterial CoaD family. In terms of assembly, homohexamer. Mg(2+) serves as cofactor.

Its subcellular location is the cytoplasm. The catalysed reaction is (R)-4'-phosphopantetheine + ATP + H(+) = 3'-dephospho-CoA + diphosphate. The protein operates within cofactor biosynthesis; coenzyme A biosynthesis; CoA from (R)-pantothenate: step 4/5. Its function is as follows. Reversibly transfers an adenylyl group from ATP to 4'-phosphopantetheine, yielding dephospho-CoA (dPCoA) and pyrophosphate. This chain is Phosphopantetheine adenylyltransferase, found in Renibacterium salmoninarum (strain ATCC 33209 / DSM 20767 / JCM 11484 / NBRC 15589 / NCIMB 2235).